The primary structure comprises 230 residues: Ribose-5-phosphate isomerase A (230 aa).

Residues 29–32, 85–88, and 98–101 contribute to the substrate site; these read TGST, DGAD, and KGGG. Glutamate 107 acts as the Proton acceptor in catalysis. Residue lysine 125 participates in substrate binding.

Belongs to the ribose 5-phosphate isomerase family. In terms of assembly, homodimer.

The enzyme catalyses aldehydo-D-ribose 5-phosphate = D-ribulose 5-phosphate. The protein operates within carbohydrate degradation; pentose phosphate pathway; D-ribose 5-phosphate from D-ribulose 5-phosphate (non-oxidative stage): step 1/1. Catalyzes the reversible conversion of ribose-5-phosphate to ribulose 5-phosphate. The protein is Ribose-5-phosphate isomerase A of Staphylococcus haemolyticus (strain JCSC1435).